The chain runs to 223 residues: Urease accessory protein UreF (223 aa).

It belongs to the UreF family. UreD, UreF and UreG form a complex that acts as a GTP-hydrolysis-dependent molecular chaperone, activating the urease apoprotein by helping to assemble the nickel containing metallocenter of UreC. The UreE protein probably delivers the nickel.

It localises to the cytoplasm. Functionally, required for maturation of urease via the functional incorporation of the urease nickel metallocenter. In Rhizobium meliloti (strain 1021) (Ensifer meliloti), this protein is Urease accessory protein UreF.